A 388-amino-acid chain; its full sequence is Succinyl-diaminopimelate desuccinylase (388 aa).

His75 lines the Zn(2+) pocket. The active site involves Asp77. Asp108 is a Zn(2+) binding site. Glu142 functions as the Proton acceptor in the catalytic mechanism. Residues Glu143, Glu171, and His361 each contribute to the Zn(2+) site.

This sequence belongs to the peptidase M20A family. DapE subfamily. In terms of assembly, homodimer. Zn(2+) is required as a cofactor. The cofactor is Co(2+).

It carries out the reaction N-succinyl-(2S,6S)-2,6-diaminopimelate + H2O = (2S,6S)-2,6-diaminopimelate + succinate. The protein operates within amino-acid biosynthesis; L-lysine biosynthesis via DAP pathway; LL-2,6-diaminopimelate from (S)-tetrahydrodipicolinate (succinylase route): step 3/3. Functionally, catalyzes the hydrolysis of N-succinyl-L,L-diaminopimelic acid (SDAP), forming succinate and LL-2,6-diaminopimelate (DAP), an intermediate involved in the bacterial biosynthesis of lysine and meso-diaminopimelic acid, an essential component of bacterial cell walls. This Methylocella silvestris (strain DSM 15510 / CIP 108128 / LMG 27833 / NCIMB 13906 / BL2) protein is Succinyl-diaminopimelate desuccinylase.